We begin with the raw amino-acid sequence, 120 residues long: Large ribosomal subunit protein uL18 (120 aa).

Belongs to the universal ribosomal protein uL18 family. In terms of assembly, part of the 50S ribosomal subunit; part of the 5S rRNA/L5/L18/L25 subcomplex. Contacts the 5S and 23S rRNAs.

This is one of the proteins that bind and probably mediate the attachment of the 5S RNA into the large ribosomal subunit, where it forms part of the central protuberance. The protein is Large ribosomal subunit protein uL18 of Exiguobacterium sp. (strain ATCC BAA-1283 / AT1b).